The following is a 577-amino-acid chain: 2-succinyl-5-enolpyruvyl-6-hydroxy-3-cyclohexene-1-carboxylate synthase (577 aa).

The protein belongs to the TPP enzyme family. MenD subfamily. In terms of assembly, homodimer. Mg(2+) serves as cofactor. Requires Mn(2+) as cofactor. The cofactor is thiamine diphosphate.

The enzyme catalyses isochorismate + 2-oxoglutarate + H(+) = 5-enolpyruvoyl-6-hydroxy-2-succinyl-cyclohex-3-ene-1-carboxylate + CO2. It functions in the pathway quinol/quinone metabolism; 1,4-dihydroxy-2-naphthoate biosynthesis; 1,4-dihydroxy-2-naphthoate from chorismate: step 2/7. Its pathway is quinol/quinone metabolism; menaquinone biosynthesis. In terms of biological role, catalyzes the thiamine diphosphate-dependent decarboxylation of 2-oxoglutarate and the subsequent addition of the resulting succinic semialdehyde-thiamine pyrophosphate anion to isochorismate to yield 2-succinyl-5-enolpyruvyl-6-hydroxy-3-cyclohexene-1-carboxylate (SEPHCHC). The polypeptide is 2-succinyl-5-enolpyruvyl-6-hydroxy-3-cyclohexene-1-carboxylate synthase (Porphyromonas gingivalis (strain ATCC BAA-308 / W83)).